A 72-amino-acid polypeptide reads, in one-letter code: MKAGIHPEYKAVNATCSCGNSFVFNSTLGKDTMHLDVCDKCHPFYSGKQRIVDTGGRVERFNKRFGALSAKK.

Cysteine 16, cysteine 18, cysteine 38, and cysteine 41 together coordinate Zn(2+).

The protein belongs to the bacterial ribosomal protein bL31 family. Type A subfamily. In terms of assembly, part of the 50S ribosomal subunit. Requires Zn(2+) as cofactor.

Its function is as follows. Binds the 23S rRNA. This Vibrio cholerae serotype O1 (strain ATCC 39541 / Classical Ogawa 395 / O395) protein is Large ribosomal subunit protein bL31.